We begin with the raw amino-acid sequence, 318 residues long: Mechanosensory protein 3 (318 aa).

LIM zinc-binding domains are found at residues 27–86 and 87–152; these read NKCY…DYSA and HRCA…PMDD. Positions 214 to 273 form a DNA-binding region, homeobox; that stretch reads RRGPRTTIRQNQLDVLNEMFSNTPKPSKHARAKLALETGLSMRVIQVWFQNRRSKERRLK.

The protein localises to the nucleus. In terms of biological role, specifies differentiation of the set of six touch receptor neurons. Binds cooperatively as a heterodimer with unc-86 to sites in the mec-3 gene promoter. The chain is Mechanosensory protein 3 (mec-3) from Caenorhabditis briggsae.